The sequence spans 377 residues: Transcription factor EC (377 aa).

Positions 169–222 constitute a bHLH domain; sequence QKKDNHNLIERRRRYNINYRIKELGTLIPKSNDPDMRWNKGTILKASVEYIKWL. A disordered region spans residues 349–377; that stretch reads DPLLSSTSPAASKESSRRSSFSTDDGDDL. Over residues 353-370 the composition is skewed to low complexity; the sequence is SSTSPAASKESSRRSSFS.

The protein belongs to the MiT/TFE family.

It is found in the nucleus. Its function is as follows. Transcriptional regulator that acts as a repressor or an activator. Binds DNA. This Gallus gallus (Chicken) protein is Transcription factor EC (TFEC).